The sequence spans 184 residues: Uroplakin-2 (184 aa).

The first 25 residues, 1 to 25, serve as a signal peptide directing secretion; it reads MASPLPVRTLPLILILLAVLAPGAS. A propeptide spanning residues 26–84 is cleaved from the precursor; that stretch reads DFNISSLSGPLSPALTESLLVALPPCHLTGGNATLMVRRANDSKVVKSSFMVPPCRGRR. N-linked (GlcNAc...) asparagine glycans are attached at residues Asn-28, Asn-57, and Asn-66. The Lumenal portion of the chain corresponds to 85-155; it reads ELVSVVDSGS…IGLGMARTGG (71 aa). A helical transmembrane segment spans residues 156 to 180; that stretch reads MVVITVLLSVAMFLLVVGFITALAL. The Cytoplasmic segment spans residues 181 to 184; sequence GARK.

Belongs to the uroplakin-2 family. As to quaternary structure, interacts with uroplakin-1a (UPK1A). Expressed only in the urothelium. Localizes to urothelial superficial cells.

It is found in the cell membrane. Functionally, component of the asymmetric unit membrane (AUM); a highly specialized biomembrane elaborated by terminally differentiated urothelial cells. May play an important role in regulating the assembly of the AUM. This Sus scrofa (Pig) protein is Uroplakin-2 (UPK2).